Here is a 438-residue protein sequence, read N- to C-terminus: Ribosomal protein uS12 methylthiotransferase RimO (438 aa).

The region spanning 4–120 (HSLFLLSLGC…ILASLGARYR (117 aa)) is the MTTase N-terminal domain. [4Fe-4S] cluster-binding residues include Cys13, Cys49, Cys83, Cys144, Cys148, and Cys151. The Radical SAM core domain occupies 130 to 359 (LTPSHYAYLK…MELQEAVAES (230 aa)). The TRAM domain occupies 362-429 (REFEGKEIEV…AHELYGEIVQ (68 aa)).

It belongs to the methylthiotransferase family. RimO subfamily. Requires [4Fe-4S] cluster as cofactor.

Its subcellular location is the cytoplasm. It carries out the reaction L-aspartate(89)-[ribosomal protein uS12]-hydrogen + (sulfur carrier)-SH + AH2 + 2 S-adenosyl-L-methionine = 3-methylsulfanyl-L-aspartate(89)-[ribosomal protein uS12]-hydrogen + (sulfur carrier)-H + 5'-deoxyadenosine + L-methionine + A + S-adenosyl-L-homocysteine + 2 H(+). Functionally, catalyzes the methylthiolation of an aspartic acid residue of ribosomal protein uS12. This is Ribosomal protein uS12 methylthiotransferase RimO from Chlorobium chlorochromatii (strain CaD3).